We begin with the raw amino-acid sequence, 891 residues long: Alanine--tRNA ligase (891 aa).

Residues histidine 564, histidine 568, cysteine 677, and histidine 681 each coordinate Zn(2+).

The protein belongs to the class-II aminoacyl-tRNA synthetase family. It depends on Zn(2+) as a cofactor.

It localises to the cytoplasm. The catalysed reaction is tRNA(Ala) + L-alanine + ATP = L-alanyl-tRNA(Ala) + AMP + diphosphate. Its function is as follows. Catalyzes the attachment of alanine to tRNA(Ala) in a two-step reaction: alanine is first activated by ATP to form Ala-AMP and then transferred to the acceptor end of tRNA(Ala). Also edits incorrectly charged Ser-tRNA(Ala) and Gly-tRNA(Ala) via its editing domain. This is Alanine--tRNA ligase from Bradyrhizobium sp. (strain ORS 278).